A 633-amino-acid polypeptide reads, in one-letter code: Phosphomethylpyrimidine synthase (633 aa).

Substrate is bound by residues Asn245, Met274, Tyr303, His339, 359 to 361 (SRG), 400 to 403 (DGLR), and Glu439. His443 lines the Zn(2+) pocket. Tyr466 is a binding site for substrate. Residue His507 coordinates Zn(2+). Positions 587, 590, and 595 each coordinate [4Fe-4S] cluster.

This sequence belongs to the ThiC family. In terms of assembly, homodimer. [4Fe-4S] cluster is required as a cofactor.

The enzyme catalyses 5-amino-1-(5-phospho-beta-D-ribosyl)imidazole + S-adenosyl-L-methionine = 4-amino-2-methyl-5-(phosphooxymethyl)pyrimidine + CO + 5'-deoxyadenosine + formate + L-methionine + 3 H(+). The protein operates within cofactor biosynthesis; thiamine diphosphate biosynthesis. Functionally, catalyzes the synthesis of the hydroxymethylpyrimidine phosphate (HMP-P) moiety of thiamine from aminoimidazole ribotide (AIR) in a radical S-adenosyl-L-methionine (SAM)-dependent reaction. In Neisseria gonorrhoeae (strain ATCC 700825 / FA 1090), this protein is Phosphomethylpyrimidine synthase.